The sequence spans 459 residues: uncharacterized protein (459 aa).

In terms of domain architecture, TRAM spans 9–67; the sequence is KLEVGQTFPVTIKRLGINGEGVGYFKRQVVFIPGALPGEEVVAETTKIQRGFAEAKVKK. Residues Cys80, Cys86, Cys89, and Cys168 each coordinate [4Fe-4S] cluster. 4 residues coordinate S-adenosyl-L-methionine: Gln292, Tyr321, Asp342, and Asp390. The active-site Nucleophile is the Cys417.

The protein belongs to the class I-like SAM-binding methyltransferase superfamily. RNA M5U methyltransferase family.

This is an uncharacterized protein from Bacillus cereus (strain ATCC 10987 / NRS 248).